A 431-amino-acid polypeptide reads, in one-letter code: Tol-Pal system protein TolB (431 aa).

Positions 1 to 26 (MSLMTKLGFRALVASCLIAAGSAANA) are cleaved as a signal peptide. Positions 411–431 (PQILSVQGGSVREPSWGPFMQ) are disordered.

Belongs to the TolB family. In terms of assembly, the Tol-Pal system is composed of five core proteins: the inner membrane proteins TolA, TolQ and TolR, the periplasmic protein TolB and the outer membrane protein Pal. They form a network linking the inner and outer membranes and the peptidoglycan layer.

It localises to the periplasm. Functionally, part of the Tol-Pal system, which plays a role in outer membrane invagination during cell division and is important for maintaining outer membrane integrity. This Burkholderia multivorans (strain ATCC 17616 / 249) protein is Tol-Pal system protein TolB.